Here is a 68-residue protein sequence, read N- to C-terminus: Ribosome modulation factor (68 aa).

Belongs to the ribosome modulation factor family.

Its subcellular location is the cytoplasm. Functionally, during stationary phase, converts 70S ribosomes to an inactive dimeric form (100S ribosomes). The polypeptide is Ribosome modulation factor (Alcanivorax borkumensis (strain ATCC 700651 / DSM 11573 / NCIMB 13689 / SK2)).